Consider the following 267-residue polypeptide: Undecaprenyl-diphosphatase (267 aa).

The next 8 helical transmembrane spans lie at 1–21 (MSYFEAFVLALIQGLTEFLPI), 39–59 (QGLAFDVAVHVGTLAAVVIYF), 83–103 (AKLAWMIVIATIPACIFGLVM), 111–131 (LRSAYVIATTTIIFGLLLWWV), 144–164 (AGWKKALFIGIAQALAMIPGT), 189–209 (FLMSIPIITLAGSYLGLKLVT), 218–238 (FLLTGIVTSFISAYLCIHLFL), and 246–266 (MTPFVIYRLILGVGLFAYLLM).

The protein belongs to the UppP family.

The protein localises to the cell inner membrane. It catalyses the reaction di-trans,octa-cis-undecaprenyl diphosphate + H2O = di-trans,octa-cis-undecaprenyl phosphate + phosphate + H(+). Functionally, catalyzes the dephosphorylation of undecaprenyl diphosphate (UPP). Confers resistance to bacitracin. In Vibrio vulnificus (strain CMCP6), this protein is Undecaprenyl-diphosphatase.